Here is a 380-residue protein sequence, read N- to C-terminus: Cystathionine gamma-synthase (380 aa).

Lys-195 bears the N6-(pyridoxal phosphate)lysine mark.

It belongs to the trans-sulfuration enzymes family. In terms of assembly, homotetramer. Pyridoxal 5'-phosphate is required as a cofactor.

It is found in the cytoplasm. It carries out the reaction O-succinyl-L-homoserine + L-cysteine = L,L-cystathionine + succinate + H(+). It participates in amino-acid biosynthesis; L-methionine biosynthesis via de novo pathway; L-cystathionine from O-succinyl-L-homoserine: step 1/1. Four natural products, alpha-lapachone, 9-hydroxy-alpha-lapachone, Paulownin, and Yangambin, show strong inhibitory activities against CGS. All these four inhibitors prevent the binding of OSHS to CGS in a non-competitive fashion. These compounds are specific inhibitors against CGS from H.pylori relative to E.coli since they exhibit very low inhibition activities against CGS from E.coli. Functionally, catalyzes the formation of L-cystathionine from O-succinyl-L-homoserine (OSHS) and L-cysteine, via a gamma-replacement reaction. In the absence of thiol, catalyzes gamma-elimination to form 2-oxobutanoate, succinate and ammonia. In Helicobacter pylori (Campylobacter pylori), this protein is Cystathionine gamma-synthase (metB).